Reading from the N-terminus, the 320-residue chain is Putative thiosulfate sulfurtransferase (320 aa).

The signal sequence occupies residues 1 to 37; it reads MSVRSLRWPRQKAFLAVISLVVAVLLAVPGWLTPATA. 2 consecutive Rhodanese domains span residues 56–166 and 194–315; these read NNKQ…PVTK and LTGK…PVET. The Cysteine persulfide intermediate role is filled by Cys274.

It is found in the periplasm. The catalysed reaction is thiosulfate + hydrogen cyanide = thiocyanate + sulfite + 2 H(+). Functionally, may be a sulfotransferase involved in the transport of sulfate. Displays very low rhodanese activity. The chain is Putative thiosulfate sulfurtransferase (rhdA) from Synechococcus elongatus (strain ATCC 33912 / PCC 7942 / FACHB-805) (Anacystis nidulans R2).